Consider the following 463-residue polypeptide: Bifunctional protein GlmU (463 aa).

Residues 1-233 form a pyrophosphorylase region; sequence MSKKSTFIIL…NFEVMGINSR (233 aa). UDP-N-acetyl-alpha-D-glucosamine-binding positions include 10-13, K24, Q76, 81-82, 104-106, G143, E158, N173, and N231; these read LAAG, GT, and YGD. Residue D106 participates in Mg(2+) binding. N231 lines the Mg(2+) pocket. Residues 234–254 form a linker region; it reads YELFVAEQELKLRINKEHLSK. The interval 255 to 463 is N-acetyltransferase; it reads GVQIIDIYST…LRRKQMYENR (209 aa). Residues R336 and K354 each contribute to the UDP-N-acetyl-alpha-D-glucosamine site. The active-site Proton acceptor is the H366. UDP-N-acetyl-alpha-D-glucosamine contacts are provided by Y369 and N380. Acetyl-CoA is bound by residues 389–390, A426, and R443; that span reads NY.

In the N-terminal section; belongs to the N-acetylglucosamine-1-phosphate uridyltransferase family. It in the C-terminal section; belongs to the transferase hexapeptide repeat family. Homotrimer. It depends on Mg(2+) as a cofactor.

The protein resides in the cytoplasm. The enzyme catalyses alpha-D-glucosamine 1-phosphate + acetyl-CoA = N-acetyl-alpha-D-glucosamine 1-phosphate + CoA + H(+). The catalysed reaction is N-acetyl-alpha-D-glucosamine 1-phosphate + UTP + H(+) = UDP-N-acetyl-alpha-D-glucosamine + diphosphate. It participates in nucleotide-sugar biosynthesis; UDP-N-acetyl-alpha-D-glucosamine biosynthesis; N-acetyl-alpha-D-glucosamine 1-phosphate from alpha-D-glucosamine 6-phosphate (route II): step 2/2. It functions in the pathway nucleotide-sugar biosynthesis; UDP-N-acetyl-alpha-D-glucosamine biosynthesis; UDP-N-acetyl-alpha-D-glucosamine from N-acetyl-alpha-D-glucosamine 1-phosphate: step 1/1. The protein operates within bacterial outer membrane biogenesis; LPS lipid A biosynthesis. Its function is as follows. Catalyzes the last two sequential reactions in the de novo biosynthetic pathway for UDP-N-acetylglucosamine (UDP-GlcNAc). The C-terminal domain catalyzes the transfer of acetyl group from acetyl coenzyme A to glucosamine-1-phosphate (GlcN-1-P) to produce N-acetylglucosamine-1-phosphate (GlcNAc-1-P), which is converted into UDP-GlcNAc by the transfer of uridine 5-monophosphate (from uridine 5-triphosphate), a reaction catalyzed by the N-terminal domain. This is Bifunctional protein GlmU from Caldicellulosiruptor saccharolyticus (strain ATCC 43494 / DSM 8903 / Tp8T 6331).